We begin with the raw amino-acid sequence, 88 residues long: ATP synthase subunit 9, mitochondrial (88 aa).

2 consecutive transmembrane segments (helical) span residues 30–50 (IGLT…ILAV) and 66–86 (LGFA…FLIL).

This sequence belongs to the ATPase C chain family. In terms of assembly, F-type ATPases have 2 components, CF(1) - the catalytic core - and CF(0) - the membrane proton channel. CF(1) has five subunits: alpha(3), beta(3), gamma(1), delta(1), epsilon(1). CF(0) has three main subunits: a, b and c.

The protein resides in the mitochondrion membrane. In terms of biological role, mitochondrial membrane ATP synthase (F(1)F(0) ATP synthase or Complex V) produces ATP from ADP in the presence of a proton gradient across the membrane which is generated by electron transport complexes of the respiratory chain. F-type ATPases consist of two structural domains, F(1) - containing the extramembraneous catalytic core and F(0) - containing the membrane proton channel, linked together by a central stalk and a peripheral stalk. During catalysis, ATP synthesis in the catalytic domain of F(1) is coupled via a rotary mechanism of the central stalk subunits to proton translocation. Part of the complex F(0) domain. A homomeric c-ring of probably 10 subunits is part of the complex rotary element. This is ATP synthase subunit 9, mitochondrial (atp9) from Dictyostelium citrinum (Slime mold).